Reading from the N-terminus, the 506-residue chain is Maturase K (506 aa).

It belongs to the intron maturase 2 family. MatK subfamily.

It localises to the plastid. The protein localises to the chloroplast. Usually encoded in the trnK tRNA gene intron. Probably assists in splicing its own and other chloroplast group II introns. The protein is Maturase K of Trifolium gracilentum (Pinpoint clover).